The sequence spans 40 residues: GCGDINAACKSDCDCCGNSVTCDCYFTDCKCRESAIRKQF.

Intrachain disulfides connect Cys2–Cys16, Cys9–Cys22, Cys15–Cys31, and Cys24–Cys29.

As to expression, expressed by the venom gland.

The protein localises to the secreted. Its function is as follows. Insecticidal neurotoxin that reversibly inhibits the N-methyl-D-aspartate (NMDA)-subtype of ionotropic glutamate receptor (GRIN) and inhibits inactivation of insect sodium channels (Nav). In vivo, is highly toxic to insects. The protein is U12-ctenitoxin-Co1a of Ctenus ornatus (Brazilian spider).